Here is a 272-residue protein sequence, read N- to C-terminus: ATP phosphoribosyltransferase regulatory subunit (272 aa).

It belongs to the class-II aminoacyl-tRNA synthetase family. HisZ subfamily. In terms of assembly, heteromultimer composed of HisG and HisZ subunits.

It is found in the cytoplasm. Its pathway is amino-acid biosynthesis; L-histidine biosynthesis; L-histidine from 5-phospho-alpha-D-ribose 1-diphosphate: step 1/9. In terms of biological role, required for the first step of histidine biosynthesis. May allow the feedback regulation of ATP phosphoribosyltransferase activity by histidine. The protein is ATP phosphoribosyltransferase regulatory subunit of Staphylococcus aureus (strain bovine RF122 / ET3-1).